Here is a 951-residue protein sequence, read N- to C-terminus: Valine--tRNA ligase (951 aa).

Residues 42–52 (PNVTGSLHMGH) carry the 'HIGH' region motif. Residues 554 to 558 (KMSKS) carry the 'KMSKS' region motif. Lysine 557 contributes to the ATP binding site. The stretch at 882-951 (LIDKDAELAR…EEQKATIAAL (70 aa)) forms a coiled coil.

The protein belongs to the class-I aminoacyl-tRNA synthetase family. ValS type 1 subfamily. In terms of assembly, monomer.

It is found in the cytoplasm. The catalysed reaction is tRNA(Val) + L-valine + ATP = L-valyl-tRNA(Val) + AMP + diphosphate. Its function is as follows. Catalyzes the attachment of valine to tRNA(Val). As ValRS can inadvertently accommodate and process structurally similar amino acids such as threonine, to avoid such errors, it has a 'posttransfer' editing activity that hydrolyzes mischarged Thr-tRNA(Val) in a tRNA-dependent manner. The chain is Valine--tRNA ligase from Vibrio vulnificus (strain CMCP6).